A 228-amino-acid chain; its full sequence is 2-C-methyl-D-erythritol 4-phosphate cytidylyltransferase (228 aa).

Belongs to the IspD/TarI cytidylyltransferase family. IspD subfamily.

The catalysed reaction is 2-C-methyl-D-erythritol 4-phosphate + CTP + H(+) = 4-CDP-2-C-methyl-D-erythritol + diphosphate. It functions in the pathway isoprenoid biosynthesis; isopentenyl diphosphate biosynthesis via DXP pathway; isopentenyl diphosphate from 1-deoxy-D-xylulose 5-phosphate: step 2/6. Catalyzes the formation of 4-diphosphocytidyl-2-C-methyl-D-erythritol from CTP and 2-C-methyl-D-erythritol 4-phosphate (MEP). The chain is 2-C-methyl-D-erythritol 4-phosphate cytidylyltransferase from Mannheimia succiniciproducens (strain KCTC 0769BP / MBEL55E).